The primary structure comprises 138 residues: Acidic phospholipase A2 pgPLA 1b/pgPLA 2b (138 aa).

The N-terminal stretch at 1–16 (MRTLWIMAVLLVGVKG) is a signal peptide. Disulfide bonds link C42–C131, C44–C60, C59–C111, C65–C138, C66–C104, C73–C97, and C91–C102. Positions 43, 45, and 47 each coordinate Ca(2+). H63 is an active-site residue. D64 contacts Ca(2+). D105 is a catalytic residue.

Belongs to the phospholipase A2 family. Group II subfamily. D49 sub-subfamily. Ca(2+) is required as a cofactor. In terms of tissue distribution, expressed by the venom gland.

Its subcellular location is the secreted. The catalysed reaction is a 1,2-diacyl-sn-glycero-3-phosphocholine + H2O = a 1-acyl-sn-glycero-3-phosphocholine + a fatty acid + H(+). Its function is as follows. PLA2 catalyzes the calcium-dependent hydrolysis of the 2-acyl groups in 3-sn-phosphoglycerides. The sequence is that of Acidic phospholipase A2 pgPLA 1b/pgPLA 2b from Protobothrops flavoviridis (Habu).